Here is a 442-residue protein sequence, read N- to C-terminus: Chromosomal replication initiator protein DnaA (442 aa).

The domain I, interacts with DnaA modulators stretch occupies residues 1-69 (METLWDGILS…AQAGEQVIGR (69 aa)). A domain II region spans residues 69 to 103 (RPIQVDFIVSEQSEEALKPVIEREPAPAAPPANVA). Residues 104-320 (SLNSKYTFSR…GALIRAVAYV (217 aa)) are domain III, AAA+ region. Residues glycine 148, glycine 150, lysine 151, and threonine 152 each contribute to the ATP site. Positions 321-442 (SISGLPMTVE…GNRLEADARH (122 aa)) are domain IV, binds dsDNA.

Belongs to the DnaA family. As to quaternary structure, oligomerizes as a right-handed, spiral filament on DNA at oriC.

It is found in the cytoplasm. Its function is as follows. Plays an essential role in the initiation and regulation of chromosomal replication. ATP-DnaA binds to the origin of replication (oriC) to initiate formation of the DNA replication initiation complex once per cell cycle. Binds the DnaA box (a 9 base pair repeat at the origin) and separates the double-stranded (ds)DNA. Forms a right-handed helical filament on oriC DNA; dsDNA binds to the exterior of the filament while single-stranded (ss)DNA is stabiized in the filament's interior. The ATP-DnaA-oriC complex binds and stabilizes one strand of the AT-rich DNA unwinding element (DUE), permitting loading of DNA polymerase. After initiation quickly degrades to an ADP-DnaA complex that is not apt for DNA replication. Binds acidic phospholipids. The sequence is that of Chromosomal replication initiator protein DnaA from Gloeobacter violaceus (strain ATCC 29082 / PCC 7421).